The following is a 297-amino-acid chain: SWIRM domain-containing protein laf1 (297 aa).

Disordered stretches follow at residues 50-70 and 109-173; these read PKCSTIPESPKDSIVEPKPTA and STPA…EFSS. Residues 159 to 173 show a composition bias toward polar residues; it reads QHNTRFKQSSREFSS. Residues 207–297 enclose the SWIRM domain; that stretch reads LRSEWKGPPL…AFHDEGFFDD (91 aa).

As to quaternary structure, component of the RPD3C(L) complex.

It localises to the nucleus. In terms of biological role, component of the RPD3C(L) histone deacetylase complex (HDAC) responsible for the deacetylation of lysine residues on the N-terminal part of the core histones (H2A, H2B, H3 and H4). Histone deacetylation gives a tag for epigenetic repression and plays an important role in transcriptional regulation, cell cycle progression and developmental events. In Schizosaccharomyces pombe (strain 972 / ATCC 24843) (Fission yeast), this protein is SWIRM domain-containing protein laf1 (laf1).